Here is a 340-residue protein sequence, read N- to C-terminus: MTMAGNFSPLVLVGDSDRVEAEAVGAYLDNWAGKDGLRLATADAIKAILAGATRLAGRIARGSLPGDPGKLVGVNSDQDQQKCIDVGSHNLFVELLIAAGAASILSEEADLPVAGKADGLIAVAIDPLDGSGNVGLGAPLGTIFSIFPADTAEPFLQPGNRQIAAGYVSFGNSVDLGFSVGEGVIFATFDPASGIFHITRRNVTLPERTSDLAFNASVQRHLSAGMQAYVNDAFLGKDGPRGRNFNMRWLGAAVGDMHRIMQRGGLFFYVNDSRPGYEKGRLRLVYEANPIAFLAREAGGKATDGSRSILDIVPQTYHERSALVFGVAEEVDILGEYFAK.

Mg(2+) is bound by residues Glu-107, Asp-126, Leu-128, and Asp-129. Asn-215 contributes to the substrate binding site. Residue Glu-287 participates in Mg(2+) binding.

Belongs to the FBPase class 1 family. Homotetramer. Mg(2+) is required as a cofactor.

The protein localises to the cytoplasm. The enzyme catalyses beta-D-fructose 1,6-bisphosphate + H2O = beta-D-fructose 6-phosphate + phosphate. Its pathway is carbohydrate biosynthesis; gluconeogenesis. This chain is Fructose-1,6-bisphosphatase class 1, found in Brucella anthropi (strain ATCC 49188 / DSM 6882 / CCUG 24695 / JCM 21032 / LMG 3331 / NBRC 15819 / NCTC 12168 / Alc 37) (Ochrobactrum anthropi).